A 370-amino-acid polypeptide reads, in one-letter code: TD and POZ domain-containing protein 4 (370 aa).

The 131-residue stretch at 19 to 149 (KLCYRWTISN…DDKFTLLCKV (131 aa)) folds into the MATH domain. One can recognise a BTB domain in the interval 188–251 (TDCSLLVAGH…MMGFIYTGKV (64 aa)).

It belongs to the Tdpoz family.

The polypeptide is TD and POZ domain-containing protein 4 (Mus musculus (Mouse)).